Reading from the N-terminus, the 371-residue chain is Cytochrome b (371 aa).

The next 4 membrane-spanning stretches (helical) occupy residues 25–45, 69–90, 105–125, and 170–190; these read FGSM…FLAI, WIMQ…YIHI, WLSG…GYVL, and FFAL…IHII. The heme b site is built by histidine 75 and histidine 89. Heme b-binding residues include histidine 174 and histidine 188. Position 193 (histidine 193) interacts with a ubiquinone. Transmembrane regions (helical) follow at residues 218 to 238, 280 to 300, 312 to 332, and 339 to 358; these read YKDT…LSFS, LGGT…PFTH, LAQM…WTAS, and FIII…IMNP.

The protein belongs to the cytochrome b family. In terms of assembly, the cytochrome bc1 complex contains 3 respiratory subunits (MT-CYB, CYC1 and UQCRFS1), 2 core proteins (UQCRC1 and UQCRC2) and probably 6 low-molecular weight proteins. Heme b is required as a cofactor.

The protein localises to the mitochondrion inner membrane. Component of the ubiquinol-cytochrome c reductase complex (complex III or cytochrome b-c1 complex) that is part of the mitochondrial respiratory chain. The b-c1 complex mediates electron transfer from ubiquinol to cytochrome c. Contributes to the generation of a proton gradient across the mitochondrial membrane that is then used for ATP synthesis. The polypeptide is Cytochrome b (MT-CYB) (Sinomicrurus kelloggi (Kellogg's coral snake)).